A 169-amino-acid chain; its full sequence is Peptide methionine sulfoxide reductase MsrA (169 aa).

Residue Cys-10 is part of the active site.

Belongs to the MsrA Met sulfoxide reductase family.

It carries out the reaction L-methionyl-[protein] + [thioredoxin]-disulfide + H2O = L-methionyl-(S)-S-oxide-[protein] + [thioredoxin]-dithiol. The enzyme catalyses [thioredoxin]-disulfide + L-methionine + H2O = L-methionine (S)-S-oxide + [thioredoxin]-dithiol. Has an important function as a repair enzyme for proteins that have been inactivated by oxidation. Catalyzes the reversible oxidation-reduction of methionine sulfoxide in proteins to methionine. The polypeptide is Peptide methionine sulfoxide reductase MsrA (Streptococcus equi subsp. equi (strain 4047)).